The following is a 915-amino-acid chain: Kinesin-like protein KIN-10A (915 aa).

The span at 1-16 shows a compositional bias: pro residues; that stretch reads MAPPTPSPRPGPPPTP. Disordered stretches follow at residues 1 to 28 and 34 to 53; these read MAPPTPSPRPGPPPTPQAAMTTPLKTPA and HFPAMTPRNGGGGGAAAGGT. The Kinesin motor domain occupies 56–391; it reads PVEVIGRIRN…LEYGAKAKCI (336 aa). ATP is bound at residue 137–144; it reads GPTGSGKS. Positions 426–517 form a coiled coil; that stretch reads NLQKENKLRE…QRLKEVEREK (92 aa). Positions 676–718 are disordered; it reads PAKKAFGDENNEPAKQTFGDENKQQPAKRVFGDENKDPSAWGA.

This sequence belongs to the TRAFAC class myosin-kinesin ATPase superfamily. Kinesin family. KIN-10 subfamily.

This chain is Kinesin-like protein KIN-10A, found in Oryza sativa subsp. japonica (Rice).